The following is a 951-amino-acid chain: Sodium/potassium exporting P-type ATPase 1 (951 aa).

The Cytoplasmic portion of the chain corresponds to 1 to 57 (MMGANSTEWHGQSVEQVTELLGTDVERGLKESVVGQLQKQFGPNELKGQRGVNPWKV). Residues 58–78 (LLAQFTNGLTVILLIATVVSF) form a helical membrane-spanning segment. The Extracellular segment spans residues 79–82 (AVQD). Residues 83 to 103 (HAEGGVLAFVIIFNASVGFVQ) traverse the membrane as a helical segment. Over 104-247 (EYRAEKTMDA…TPMQKRLNRM (144 aa)) the chain is Cytoplasmic. A helical transmembrane segment spans residues 248–268 (AYILFGISLVLAVIVFAVNKF). Over 269–273 (EFNTD) the chain is Extracellular. Residues 274–294 (IIIYAVSLGIAVIPEGLIAVI) form a helical membrane-spanning segment. Residues 295–717 (TIVMALGVRR…GRRIFSNIRK (423 aa)) are Cytoplasmic-facing. Aspartate 330 acts as the 4-aspartylphosphate intermediate in catalysis. The Mg(2+) site is built by aspartate 330 and threonine 332. Threonine 332, glutamate 414, lysine 467, arginine 511, threonine 575, glycine 576, aspartate 577, arginine 636, and lysine 642 together coordinate ATP. Residue aspartate 661 coordinates Mg(2+). ATP is bound at residue asparagine 664. Residues 718–738 (FILHLVSTNVGEVIVLIIGLA) traverse the membrane as a helical segment. Over 739 to 743 (FKDRN) the chain is Extracellular. Residues 744 to 764 (GVSVFPLAPVQILFMNMVTST) form a helical membrane-spanning segment. Over 765 to 799 (PPAMALGVEAASKDTMKVPPHTKGLFGKEVLADMM) the chain is Cytoplasmic. Residues 800–820 (VYGIIMGSLILVDWVLVIYAF) form a helical membrane-spanning segment. The Extracellular segment spans residues 821–840 (GDSQLGLECNSDRMLNECNT). A helical membrane pass occupies residues 841-861 (VFRARSTIMVALIWMLLLHAY). The Cytoplasmic portion of the chain corresponds to 862–885 (NCRHPRASLFTAEGGGASKLFSNR). A helical membrane pass occupies residues 886 to 906 (LLVWSVLLGSLMPIPTVYIPT). The Extracellular segment spans residues 907–916 (LNTKIFKQET). The chain crosses the membrane as a helical span at residues 917-937 (ISWEWSIVVVSVVAFFFLSEL). Over 938-951 (YKLIKRNVMTSRVI) the chain is Cytoplasmic.

The protein belongs to the cation transport ATPase (P-type) (TC 3.A.3) family. Type IID subfamily. The cofactor is Mg(2+). The active site is phosphorylated in presence of sodium or potassium and in conditions of higher pH. Not phosphorylated in presence of calcium ions.

It localises to the cell membrane. It carries out the reaction Na(+)(in) + ATP + H2O = Na(+)(out) + ADP + phosphate + H(+). It catalyses the reaction K(+)(in) + ATP + H2O = K(+)(out) + ADP + phosphate + H(+). Catalyzes the hydrolysis of ATP coupled with the export of sodium and potassium from the cell. Appears to export potassium more efficiently than sodium. May transport other cations such as lithium. Sodium/potassium efflux ATPases are involved in salt tolerance and maintaining the membrane potential across the plasma membrane in high salinity (Na+) or alkaline (K+) environments. The protein is Sodium/potassium exporting P-type ATPase 1 of Marchantia polymorpha (Common liverwort).